We begin with the raw amino-acid sequence, 391 residues long: Putative 1-acyl-sn-glycerol-3-phosphate acyltransferase acl-12 (391 aa).

2 consecutive transmembrane segments (helical) span residues 47–67 (FFFMTAWVVPVACVITVSLLF) and 84–104 (LCAMVNAHWNAVSVFVGATVT). The short motif at 124–129 (HLGLLD) is the HXXXXD motif element.

This sequence belongs to the 1-acyl-sn-glycerol-3-phosphate acyltransferase family.

It is found in the membrane. It carries out the reaction a 1-acyl-sn-glycero-3-phosphate + an acyl-CoA = a 1,2-diacyl-sn-glycero-3-phosphate + CoA. It functions in the pathway phospholipid metabolism; CDP-diacylglycerol biosynthesis; CDP-diacylglycerol from sn-glycerol 3-phosphate: step 2/3. Functionally, converts lysophosphatidic acid (LPA) into phosphatidic acid by incorporating an acyl moiety at the sn-2 position of the glycerol backbone. This Caenorhabditis elegans protein is Putative 1-acyl-sn-glycerol-3-phosphate acyltransferase acl-12 (acl-12).